Here is a 944-residue protein sequence, read N- to C-terminus: Envelope glycoprotein B (944 aa).

2 disordered regions span residues 1 to 37 (MGPP…RPGS) and 68 to 108 (TDGG…RVTG). The first 55 residues, 1–55 (MGPPPPLRRQRLLLPRPSRRRPPARLASGRRSSRPGSSWTWYATLIASLVWYPTV), serve as a signal peptide directing secretion. Low complexity predominate over residues 24–37 (ARLASGRRSSRPGS). Over 56–785 (SSTTLEATVV…GGFVSFFTNP (730 aa)) the chain is Virion surface. Residues 71–85 (GATGQASGGGGGGAG) show a composition bias toward gly residues. Residues 89–99 (PSESPETSADT) show a composition bias toward polar residues. N-linked (GlcNAc...) asparagine; by host glycosylation occurs at asparagine 114. 5 disulfides stabilise this stretch: cysteine 125–cysteine 577, cysteine 142–cysteine 533, cysteine 215–cysteine 280, cysteine 372–cysteine 420, and cysteine 608–cysteine 645. An involved in fusion and/or binding to host membrane region spans residues 182–188 (SYAYIYT). Asparagine 238 carries N-linked (GlcNAc...) asparagine; by host glycosylation. Residues 267 to 274 (GSTWLYKE) are involved in fusion and/or binding to host membrane. N-linked (GlcNAc...) asparagine; by host glycans are attached at residues asparagine 369, asparagine 409, asparagine 414, asparagine 426, asparagine 481, asparagine 485, and asparagine 620. Hydrophobic membrane proximal region regions lie at residues 731–783 (ITSK…SFFT) and 762–782 (LVLG…VSFF). Residues 786–806 (FGSLTLIILVVAVVVIVFLLY) form a helical membrane-spanning segment. Over 807–944 (QRQRSAVRQP…RDTGSDSELA (138 aa)) the chain is Intravirion. Disordered stretches follow at residues 834 to 878 (TVTT…SATA) and 902 to 944 (REVP…SELA). The Internalization motif signature appears at 931–934 (YRRL).

This sequence belongs to the herpesviridae glycoprotein B family. Homotrimer; disulfide-linked. Binds to heparan sulfate proteoglycans. Interacts with gH/gL heterodimer. A proteolytic cleavage by host furin generates two subunits that remain linked by disulfide bonds.

The protein localises to the virion membrane. Its subcellular location is the host cell membrane. It localises to the host endosome membrane. It is found in the host Golgi apparatus membrane. Its function is as follows. Envelope glycoprotein that forms spikes at the surface of virion envelope. Essential for the initial attachment to heparan sulfate moieties of the host cell surface proteoglycans. Involved in fusion of viral and cellular membranes leading to virus entry into the host cell. Following initial binding to its host receptors, membrane fusion is mediated by the fusion machinery composed at least of gB and the heterodimer gH/gL. May be involved in the fusion between the virion envelope and the outer nuclear membrane during virion egress. In Tupaiid herpesvirus (strain 2) (TuHV-2), this protein is Envelope glycoprotein B.